Consider the following 308-residue polypeptide: Cell division protein FtsX (308 aa).

The Cytoplasmic portion of the chain corresponds to 1-24 (MISRFFRHLFEALKSLKRNGWMTV). A helical membrane pass occupies residues 25–45 (AAVSSVMITLTLVAIFASVIF). Residues 46 to 178 (NTAKLATDIE…NTERLFKLAS (133 aa)) are Extracellular-facing. A helical membrane pass occupies residues 179–199 (FIRVWGLGIAALLIFIAVFLI). Topologically, residues 200 to 236 (SNTIRITIISRSREIQIMRLVGAKNSYIRGPFLLEGA) are cytoplasmic. The chain crosses the membrane as a helical span at residues 237–257 (FIGLLGAIAPSVLVFIVYQIV). Over 258–276 (YQSVNKSLVGQNLSMISPD) the chain is Extracellular. The chain crosses the membrane as a helical span at residues 277–297 (LFSPLMIALLFVIGVFIGSLG). The Cytoplasmic segment spans residues 298-308 (SGISMRRFLKI).

Belongs to the ABC-4 integral membrane protein family. FtsX subfamily. As to quaternary structure, homodimer. Interacts with FtsE; forms a membrane-associated complex. Interacts (via large extracellular loop) with PcsB (via N-terminal coiled-coil domain). This interaction directs PcsB to equatorial and septal sites of dividing cells.

Its subcellular location is the cell membrane. In terms of biological role, part of the ABC transporter FtsEX involved in asymmetric cellular division facilitating the initiation of sporulation. Required in maintaining normal growth and cellular morphology. In Streptococcus pneumoniae serotype 2 (strain D39 / NCTC 7466), this protein is Cell division protein FtsX.